The following is a 338-amino-acid chain: DNA-directed RNA polymerase subunit alpha (338 aa).

Residues 1–234 (MIHKNWQELI…DQLSIFVNFD (234 aa)) form an alpha N-terminal domain (alpha-NTD) region. Positions 250–338 (FNPLLLKKVD…ELAKKYEDNF (89 aa)) are alpha C-terminal domain (alpha-CTD).

The protein belongs to the RNA polymerase alpha chain family. In terms of assembly, homodimer. The RNAP catalytic core consists of 2 alpha, 1 beta, 1 beta' and 1 omega subunit. When a sigma factor is associated with the core the holoenzyme is formed, which can initiate transcription.

The catalysed reaction is RNA(n) + a ribonucleoside 5'-triphosphate = RNA(n+1) + diphosphate. DNA-dependent RNA polymerase catalyzes the transcription of DNA into RNA using the four ribonucleoside triphosphates as substrates. The polypeptide is DNA-directed RNA polymerase subunit alpha (Jannaschia sp. (strain CCS1)).